The primary structure comprises 132 residues: Small ribosomal subunit protein uS19 (132 aa).

The protein belongs to the universal ribosomal protein uS19 family.

In terms of biological role, protein S19 forms a complex with S13 that binds strongly to the 16S ribosomal RNA. The chain is Small ribosomal subunit protein uS19 (rps19) from Pyrococcus abyssi (strain GE5 / Orsay).